The primary structure comprises 184 residues: Tumor necrosis factor alpha-induced protein 8-like protein 2 (184 aa).

The residue at position 3 (serine 3) is a Phosphoserine; by MAP3K7.

Belongs to the TNFAIP8 family. TNFAIP8L2 subfamily. May interact with CASP8; however, such result is unclear since PubMed:19079267 could not reproduce the interaction with CASP8. Interacts with RAC1. Post-translationally, phosphorylated by TAK1/MAP3K7; this phosphorylation triggers association with BTRC and subsequent ubiquitination and degradation. Ubiquitinated in a BTRC-depdent manner; leading to degradation mediated through the proteasome pathway. In terms of tissue distribution, expressed in T-cells, B-cells, macrophages, neurons in the brain and brainstem, and stratified squamous epithelia of the esophagus, cervix and skin.

It localises to the cytoplasm. The protein resides in the nucleus. The protein localises to the lysosome. Functionally, acts as a negative regulator of innate and adaptive immunity by maintaining immune homeostasis. Plays a regulatory role in the Toll-like signaling pathway by determining the strength of LPS-induced signaling and gene expression. Inhibits TCR-mediated T-cell activation and negatively regulate T-cell function to prevent hyperresponsiveness. Also inhibits autolysosome formation via negatively modulating MTOR activation by interacting with RAC1 and promoting the disassociation of the RAC1-MTOR complex. Plays an essential role in NK-cell biology by acting as a checkpoint and displaying an expression pattern correlating with NK-cell maturation process and by negatively regulating NK-cell maturation and antitumor immunity. Mechanistically, suppresses IL-15-triggered mTOR activity in NK-cells. The sequence is that of Tumor necrosis factor alpha-induced protein 8-like protein 2 (TNFAIP8L2) from Homo sapiens (Human).